The sequence spans 473 residues: Glutamate--tRNA ligase (473 aa).

The 'HIGH' region signature appears at P11 to G21. The 'KMSKS' region signature appears at K240–R244. An ATP-binding site is contributed by K243.

The protein belongs to the class-I aminoacyl-tRNA synthetase family. Glutamate--tRNA ligase type 1 subfamily. Monomer.

It is found in the cytoplasm. It catalyses the reaction tRNA(Glu) + L-glutamate + ATP = L-glutamyl-tRNA(Glu) + AMP + diphosphate. Catalyzes the attachment of glutamate to tRNA(Glu) in a two-step reaction: glutamate is first activated by ATP to form Glu-AMP and then transferred to the acceptor end of tRNA(Glu). This chain is Glutamate--tRNA ligase, found in Rhodopseudomonas palustris (strain ATCC BAA-98 / CGA009).